The following is a 323-amino-acid chain: Probable oxidoreductase patJ (323 aa).

Positions 291-323 are disordered; the sequence is DQSANGVNGHATGVEAKKKQLGDMTRRRSGAQE. A compositionally biased stretch (basic and acidic residues) spans 305–316; it reads EAKKKQLGDMTR.

This sequence belongs to the oxidoreductase OpS7 family.

It is found in the vacuole lumen. It localises to the cytoplasmic vesicle lumen. Its pathway is mycotoxin biosynthesis; patulin biosynthesis. Probable oxidoreductase; part of the gene cluster that mediates the biosynthesis of patulin, an acetate-derived tetraketide mycotoxin produced by several fungal species that shows antimicrobial properties against several bacteria. PatJ acts with patO in the vacuole to convert gentisyl alcohol to isoepoxydon. The pathway begins with the synthesis of 6-methylsalicylic acid by the polyketide synthase (PKS) patK via condensation of acetate and malonate units. The 6-methylsalicylic acid decarboxylase patG then catalyzes the decarboxylation of 6-methylsalicylic acid to yield m-cresol (also known as 3-methylphenol). These first reactions occur in the cytosol. The intermediate m-cresol is then transported into the endoplasmic reticulum where the cytochrome P450 monooxygenase patH converts it to m-hydroxybenzyl alcohol, which is further converted to gentisyl alcohol by the cytochrome P450 monooxygenase patI. The oxidoreductases patJ and patO further convert gentisyl alcohol to isoepoxydon in the vacuole. PatN catalyzes then the transformation of isoepoxydon into phyllostine. The cluster protein patF is responsible for the conversion from phyllostine to neopatulin whereas the alcohol dehydrogenase patD converts neopatulin to E-ascladiol. The steps between isoepoxydon and E-ascladiol occur in the cytosol, and E-ascladiol is probably secreted to the extracellular space by one of the cluster-specific transporters patC or patM. Finally, the secreted patulin synthase patE catalyzes the conversion of E-ascladiol to patulin. The polypeptide is Probable oxidoreductase patJ (Aspergillus clavatus (strain ATCC 1007 / CBS 513.65 / DSM 816 / NCTC 3887 / NRRL 1 / QM 1276 / 107)).